Here is a 323-residue protein sequence, read N- to C-terminus: D-alanine--D-alanine ligase (323 aa).

The ATP-grasp domain maps to 102-300 (KQIFRAEGIP…FTELVERMLQ (199 aa)). 130–185 (VARLGSPLVVKPSNSGSTVGISLARDEVSLAQGLALASSVSSRVFLERYIPGKEIT) provides a ligand contact to ATP. D254, E267, and N269 together coordinate Mg(2+).

This sequence belongs to the D-alanine--D-alanine ligase family. Requires Mg(2+) as cofactor. It depends on Mn(2+) as a cofactor.

It localises to the cytoplasm. The enzyme catalyses 2 D-alanine + ATP = D-alanyl-D-alanine + ADP + phosphate + H(+). It functions in the pathway cell wall biogenesis; peptidoglycan biosynthesis. Functionally, cell wall formation. The protein is D-alanine--D-alanine ligase of Synechococcus sp. (strain JA-3-3Ab) (Cyanobacteria bacterium Yellowstone A-Prime).